The sequence spans 213 residues: UPF0502 protein Daro_2469 (213 aa).

This sequence belongs to the UPF0502 family.

This Dechloromonas aromatica (strain RCB) protein is UPF0502 protein Daro_2469.